We begin with the raw amino-acid sequence, 305 residues long: Glycerol-3-phosphate dehydrogenase [NAD(P)+] (305 aa).

NADPH contacts are provided by tryptophan 11, arginine 31, and lysine 79. Lysine 79 and glycine 107 together coordinate sn-glycerol 3-phosphate. Alanine 111 is an NADPH binding site. Sn-glycerol 3-phosphate contacts are provided by lysine 162, aspartate 215, serine 225, arginine 226, and asparagine 227. The Proton acceptor role is filled by lysine 162. Arginine 226 is a binding site for NADPH. Position 252 (glutamate 252) interacts with NADPH.

It belongs to the NAD-dependent glycerol-3-phosphate dehydrogenase family.

It localises to the cytoplasm. The catalysed reaction is sn-glycerol 3-phosphate + NAD(+) = dihydroxyacetone phosphate + NADH + H(+). It carries out the reaction sn-glycerol 3-phosphate + NADP(+) = dihydroxyacetone phosphate + NADPH + H(+). The protein operates within membrane lipid metabolism; glycerophospholipid metabolism. Functionally, catalyzes the reduction of the glycolytic intermediate dihydroxyacetone phosphate (DHAP) to sn-glycerol 3-phosphate (G3P), the key precursor for phospholipid synthesis. This chain is Glycerol-3-phosphate dehydrogenase [NAD(P)+], found in Gloeobacter violaceus (strain ATCC 29082 / PCC 7421).